We begin with the raw amino-acid sequence, 64 residues long: Conotoxin Pu3.4 (64 aa).

The N-terminal stretch at 1–16 (LGVLLPICLLLFPLTA) is a signal peptide. The propeptide occupies 17–49 (LPLDGDQPADRPAERMQDDFITEQHPLFDPVKR). 3 disulfide bridges follow: cysteine 50/cysteine 63, cysteine 51/cysteine 59, and cysteine 55/cysteine 62. Proline 61 carries the post-translational modification 4-hydroxyproline.

This sequence belongs to the conotoxin M superfamily. As to expression, expressed by the venom duct.

It localises to the secreted. In Conus pulicarius (Flea-bitten cone), this protein is Conotoxin Pu3.4.